The sequence spans 590 residues: MINRNEINENDKWDLSFLFANEEEYVKTINAIEIKTKEFKKYEKLELNFDLFKETLNKYYEIMEDLEKVSYYAMLQLETDVTNKDSNKIYSICVNLATKVSNTTSYFMPKILKTDEKKIQAWINDPELKDKKIAIEKILREKKHILSEQEEKILANYTPLYTSYQSIFSALTNADMEFGEINKHPLTNSTYTLFLQNEDQKIRKEAFLRFYQKYKNNENTLANLIISDFKKNHFIAKTRRFQNTFSMQLFSNNIDKKVYTNLIETVNENLPVLNDYYEFRKKVLNQEYLYHYDVYVPLTKGIIFKNSFEDACEKILKSLEVLGNEYTKILRNGLLKERWVDKYENTGKRSGAFSAGSYNGKPYILLNYKDESIRDMFTLAHEAGHSMHSYFSIKNNPFPHYNYSIFEAEIASIINEQILAEYLLKNETDTNKIKYIKLTQIDDMISTFFRQTMFAEFEYIIHEMISKEEPVVKETLTETYMNLLKKYFGPSLKFDELSPLECLRIPHFYSPFYVYQYATGIAAALSIYKGIKENKKDAVENYIKFLKTGGSKYPLDSLNITGVDLTKKATIENTINIFKCRLEEIKKIFQ.

Position 381 (His-381) interacts with Zn(2+). Glu-382 is an active-site residue. The Zn(2+) site is built by His-385 and His-388.

It belongs to the peptidase M3B family. Zn(2+) serves as cofactor.

This is Oligoendopeptidase F homolog (pepF) from Borreliella burgdorferi (strain ATCC 35210 / DSM 4680 / CIP 102532 / B31) (Borrelia burgdorferi).